A 525-amino-acid polypeptide reads, in one-letter code: Chromosomal replication initiator protein DnaA (525 aa).

The segment at 1 to 71 (MNDFWQHCSA…ADLAREFWNT (71 aa)) is domain I, interacts with DnaA modulators. A domain II region spans residues 71–188 (TPIEVQFVLD…AEADSMYERS (118 aa)). Residues 160–181 (AAAGRRTWRPGPGAAPANGAEA) form a disordered region. The segment covering 169 to 181 (PGPGAAPANGAEA) has biased composition (low complexity). Residues 189 to 405 (KLNPVLTFDN…GALRKILAYS (217 aa)) are domain III, AAA+ region. 4 residues coordinate ATP: Gly233, Gly235, Lys236, and Thr237. Residues 406–525 (KFHGREISIE…LHVLEQTLKG (120 aa)) form a domain IV, binds dsDNA region.

It belongs to the DnaA family. Oligomerizes as a right-handed, spiral filament on DNA at oriC.

The protein localises to the cytoplasm. Plays an essential role in the initiation and regulation of chromosomal replication. ATP-DnaA binds to the origin of replication (oriC) to initiate formation of the DNA replication initiation complex once per cell cycle. Binds the DnaA box (a 9 base pair repeat at the origin) and separates the double-stranded (ds)DNA. Forms a right-handed helical filament on oriC DNA; dsDNA binds to the exterior of the filament while single-stranded (ss)DNA is stabiized in the filament's interior. The ATP-DnaA-oriC complex binds and stabilizes one strand of the AT-rich DNA unwinding element (DUE), permitting loading of DNA polymerase. After initiation quickly degrades to an ADP-DnaA complex that is not apt for DNA replication. Binds acidic phospholipids. This chain is Chromosomal replication initiator protein DnaA, found in Burkholderia vietnamiensis (strain G4 / LMG 22486) (Burkholderia cepacia (strain R1808)).